A 1012-amino-acid chain; its full sequence is AP-2 complex subunit alpha-1 (1012 aa).

HEAT repeat units follow at residues 254 to 289, 354 to 391, 393 to 430, and 525 to 565; these read AMRA…VVKN, DIIK…VSNA, DIVE…DLSW, and PTIP…CIDV. The tract at residues 652–678 is disordered; it reads STDPESVARSLSHPNGTLSNIDPQTPS. Over residues 663–675 the composition is skewed to polar residues; it reads SHPNGTLSNIDPQ. A GAE domain is found at 742–841; it reads ALCLKDSGVL…LDFSYKFGAN (100 aa).

The protein belongs to the adaptor complexes large subunit family. As to quaternary structure, adaptor protein complex 2 (AP-2) is a heterotetramer composed of two large adaptins (alpha-type and beta-type subunits), a medium adaptin (mu-type subunit) and a small adaptin (sigma-type subunit). Binds to EPSIN2.

The protein localises to the membrane. Its subcellular location is the coated pit. Subunit of the adaptor protein complex 2 (AP-2). Adaptor protein complexes function in protein transport via transport vesicles in different membrane traffic pathways. Adaptor protein complexes are vesicle coat components and appear to be involved in cargo selection and vesicle formation. AP-2 is involved in clathrin-dependent endocytosis in which cargo proteins are incorporated into vesicles surrounded by clathrin (clathrin-coated vesicles, CCVs) which are destined for fusion with the early endosome. The complex binds polyphosphoinositides. This is AP-2 complex subunit alpha-1 (ALPHA-ADR) from Arabidopsis thaliana (Mouse-ear cress).